A 183-amino-acid polypeptide reads, in one-letter code: Dual specificity protein phosphatase 22-B (183 aa).

Residues 4-144 (GINKVLPDLY…LQEFQTGELQ (141 aa)) enclose the Tyrosine-protein phosphatase domain. Cys88 serves as the catalytic Phosphocysteine intermediate.

The protein belongs to the protein-tyrosine phosphatase family. Non-receptor class dual specificity subfamily.

Its subcellular location is the cytoplasm. It localises to the nucleus. The catalysed reaction is O-phospho-L-tyrosyl-[protein] + H2O = L-tyrosyl-[protein] + phosphate. It carries out the reaction O-phospho-L-seryl-[protein] + H2O = L-seryl-[protein] + phosphate. The enzyme catalyses O-phospho-L-threonyl-[protein] + H2O = L-threonyl-[protein] + phosphate. Functionally, activates the Jnk signaling pathway. Dephosphorylates and deactivates p38 and stress-activated protein kinase/c-Jun N-terminal kinase (SAPK/JNK). The chain is Dual specificity protein phosphatase 22-B (dusp22b) from Danio rerio (Zebrafish).